Reading from the N-terminus, the 398-residue chain is O-methyltransferase mpaG (398 aa).

S-adenosyl-L-methionine is bound at residue aspartate 264. Histidine 306 acts as the Proton acceptor in catalysis. Active-site residues include glutamate 335 and glutamate 362.

This sequence belongs to the class I-like SAM-binding methyltransferase superfamily. Cation-independent O-methyltransferase family. COMT subfamily.

It is found in the cytoplasm. It localises to the cytosol. It carries out the reaction (4E,8E)-10-(4,6-dihydroxy-7-methyl-3-oxo-1,3-dihydro-2-benzofuran-5-yl)-4,8-dimethyldeca-4,8-dienoate + S-adenosyl-L-methionine = (4E,8E)-10-(4-hydroxy-6-methoxy-7-methyl-3-oxo-1,3-dihydro-2-benzofuran-5-yl)-4,8-dimethyldeca-4,8-dienoate + S-adenosyl-L-homocysteine + H(+). Its pathway is secondary metabolite biosynthesis; terpenoid biosynthesis. O-methyltransferase; part of the gene cluster that mediates the biosynthesis of mycophenolic acid (MPA), the first isolated antibiotic natural product in the world obtained from a culture of Penicillium brevicompactum in 1893. MpaC methylates farnesyl-DHMP-3C (FDHMP-3C) to yield MFDHMP-3C. The first step of the pathway is the synthesis of 5-methylorsellinic acid (5MOA) by the cytosolic polyketide synthase mpaC. 5MOA is then converted to the phthalide compound 5,7-dihydroxy-4,6-dimethylphthalide (DHMP) by the endoplasmic reticulum-bound cytochrome P450 monooxygenase mpaDE. MpaDE first catalyzes hydroxylation of 5-MOA to 4,6-dihydroxy-2-(hydroxymethyl)-3-methylbenzoic acid (DHMB). MpaDE then acts as a lactone synthase that catalyzes the ring closure to convert DHMB into DHMP. The next step is the prenylation of DHMP by the Golgi apparatus-associated prenyltransferase mpaA to yield farnesyl-DHMP (FDHMP). The ER-bound oxygenase mpaB then mediates the oxidative cleavage the C19-C20 double bond in FDHMP to yield FDHMP-3C via a mycophenolic aldehyde intermediate. The O-methyltransferase mpaG catalyzes the methylation of FDHMP-3C to yield MFDHMP-3C. After the cytosolic methylation of FDHMP-3C, MFDHMP-3C enters into peroxisomes probably via free diffusion due to its low molecular weight. Upon a peroxisomal CoA ligation reaction, catalyzed by a beta-oxidation component enzyme acyl-CoA ligase ACL891, MFDHMP-3C-CoA would then be restricted to peroxisomes for the following beta-oxidation pathway steps. The peroxisomal beta-oxidation machinery than converts MFDHMP-3C-CoA into MPA_CoA, via a beta-oxidation chain-shortening process. Finally mpaH acts as a peroxisomal acyl-CoA hydrolase with high substrate specificity toward MPA-CoA to release the final product MPA. The sequence is that of O-methyltransferase mpaG from Penicillium roqueforti (strain FM164).